We begin with the raw amino-acid sequence, 142 residues long: Large ribosomal subunit protein uL13 (142 aa).

The protein belongs to the universal ribosomal protein uL13 family. Part of the 50S ribosomal subunit.

In terms of biological role, this protein is one of the early assembly proteins of the 50S ribosomal subunit, although it is not seen to bind rRNA by itself. It is important during the early stages of 50S assembly. The polypeptide is Large ribosomal subunit protein uL13 (Agathobacter rectalis (strain ATCC 33656 / DSM 3377 / JCM 17463 / KCTC 5835 / VPI 0990) (Eubacterium rectale)).